The chain runs to 391 residues: NADH-quinone oxidoreductase subunit D (391 aa).

This sequence belongs to the complex I 49 kDa subunit family. As to quaternary structure, NDH-1 is composed of 14 different subunits. Subunits NuoB, C, D, E, F, and G constitute the peripheral sector of the complex.

It is found in the cell inner membrane. It catalyses the reaction a quinone + NADH + 5 H(+)(in) = a quinol + NAD(+) + 4 H(+)(out). In terms of biological role, NDH-1 shuttles electrons from NADH, via FMN and iron-sulfur (Fe-S) centers, to quinones in the respiratory chain. The immediate electron acceptor for the enzyme in this species is believed to be ubiquinone. Couples the redox reaction to proton translocation (for every two electrons transferred, four hydrogen ions are translocated across the cytoplasmic membrane), and thus conserves the redox energy in a proton gradient. This Rickettsia akari (strain Hartford) protein is NADH-quinone oxidoreductase subunit D.